Consider the following 182-residue polypeptide: Peptide deformylase (182 aa).

Fe cation is bound by residues C110 and H153. E154 is a catalytic residue. Position 157 (H157) interacts with Fe cation.

The protein belongs to the polypeptide deformylase family. The cofactor is Fe(2+).

It carries out the reaction N-terminal N-formyl-L-methionyl-[peptide] + H2O = N-terminal L-methionyl-[peptide] + formate. Its function is as follows. Removes the formyl group from the N-terminal Met of newly synthesized proteins. Requires at least a dipeptide for an efficient rate of reaction. N-terminal L-methionine is a prerequisite for activity but the enzyme has broad specificity at other positions. The polypeptide is Peptide deformylase (Halalkalibacterium halodurans (strain ATCC BAA-125 / DSM 18197 / FERM 7344 / JCM 9153 / C-125) (Bacillus halodurans)).